The following is a 378-amino-acid chain: Pseudouridine kinase (378 aa).

Residues Asp12, Thr26, 37–41 (GVARN), Val38, Asn137, and Lys166 contribute to the pseudouridine site. 2 residues coordinate Mg(2+): Ser181 and Thr237. Positions 237, 239, 242, 298, 306, and 310 each coordinate ATP. Position 311 (Asp311) interacts with pseudouridine.

It belongs to the carbohydrate kinase PfkB family. Forms homodimers.

It localises to the peroxisome. It catalyses the reaction pseudouridine + ATP = psi-UMP + ADP + H(+). In terms of biological role, catalyzes the phosphorylation of pseudouridine to pseudouridine 5'-phosphate (PsiMP). Catalyzes the first step in a pseudouridine degradation pathway. Acts together with the pseudouridine 5'-phosphate glycosidase PUMY in the peroxisome to prevent toxic pseudouridine monophosphate accumulation. The polypeptide is Pseudouridine kinase (Arabidopsis thaliana (Mouse-ear cress)).